Consider the following 124-residue polypeptide: Small ribosomal subunit protein uS13 (124 aa).

The disordered stretch occupies residues 89–124 (GRRHRQGLPVRGQRTKTNARTRKGPKRTVAGKKKAK). The segment covering 101-124 (QRTKTNARTRKGPKRTVAGKKKAK) has biased composition (basic residues).

The protein belongs to the universal ribosomal protein uS13 family. Part of the 30S ribosomal subunit. Forms a loose heterodimer with protein S19. Forms two bridges to the 50S subunit in the 70S ribosome.

In terms of biological role, located at the top of the head of the 30S subunit, it contacts several helices of the 16S rRNA. In the 70S ribosome it contacts the 23S rRNA (bridge B1a) and protein L5 of the 50S subunit (bridge B1b), connecting the 2 subunits; these bridges are implicated in subunit movement. Contacts the tRNAs in the A and P-sites. The chain is Small ribosomal subunit protein uS13 from Nocardioides sp. (strain ATCC BAA-499 / JS614).